An 84-amino-acid polypeptide reads, in one-letter code: Small ribosomal subunit protein uS17 (84 aa).

Belongs to the universal ribosomal protein uS17 family. Part of the 30S ribosomal subunit.

Its function is as follows. One of the primary rRNA binding proteins, it binds specifically to the 5'-end of 16S ribosomal RNA. In Clostridium botulinum (strain Alaska E43 / Type E3), this protein is Small ribosomal subunit protein uS17.